A 276-amino-acid chain; its full sequence is Large ribosomal subunit protein uL2 (276 aa).

Disordered stretches follow at residues 1–60 (MSIK…RHKR) and 226–276 (NAVD…KRNQ). A compositionally biased stretch (basic and acidic residues) spans 20-31 (SKEEITREEPEK). Composition is skewed to basic residues over residues 50–60 (STRRQGGRHKR) and 258–276 (KTRR…KRNQ).

The protein belongs to the universal ribosomal protein uL2 family. Part of the 50S ribosomal subunit. Forms a bridge to the 30S subunit in the 70S ribosome.

Functionally, one of the primary rRNA binding proteins. Required for association of the 30S and 50S subunits to form the 70S ribosome, for tRNA binding and peptide bond formation. It has been suggested to have peptidyltransferase activity; this is somewhat controversial. Makes several contacts with the 16S rRNA in the 70S ribosome. The polypeptide is Large ribosomal subunit protein uL2 (Natranaerobius thermophilus (strain ATCC BAA-1301 / DSM 18059 / JW/NM-WN-LF)).